The sequence spans 459 residues: Interleukin-7 receptor subunit alpha (459 aa).

A signal peptide spans methionine 1 to glycine 20. Over glutamate 21–aspartate 239 the chain is Extracellular. Cysteine 42 and cysteine 57 are disulfide-bonded. Asparagine 49 and asparagine 65 each carry an N-linked (GlcNAc...) asparagine glycan. 2 disulfide bridges follow: cysteine 74–cysteine 82 and cysteine 108–cysteine 118. A Fibronectin type-III domain is found at alanine 131–isoleucine 231. N-linked (GlcNAc...) asparagine glycosylation is found at asparagine 151 and asparagine 182. The WSXWS motif signature appears at tryptophan 217 to serine 221. 2 N-linked (GlcNAc...) asparagine glycosylation sites follow: asparagine 232 and asparagine 233. The chain crosses the membrane as a helical span at residues proline 240–tryptophan 264. Over lysine 265–glutamine 459 the chain is Cytoplasmic. Residues valine 272–lysine 280 carry the Box 1 motif motif. The residue at position 282 (threonine 282) is a Phosphothreonine; by PKC.

It belongs to the type I cytokine receptor family. Type 4 subfamily. In terms of assembly, the IL7 receptor is a heterodimer of IL7R and IL2RG. The TSLP receptor is a heterodimer of CRLF2 and IL7R. Interacts with CD53. N-glycosylated IL-7Ralpha binds IL7 300-fold more tightly than the unglycosylated form. In terms of processing, ubiquitinated by MARCHF8; leading to lysosomal degradation.

Its subcellular location is the cell membrane. It is found in the secreted. Functionally, receptor for interleukin-7. Also acts as a receptor for thymic stromal lymphopoietin (TSLP). The chain is Interleukin-7 receptor subunit alpha (IL7R) from Homo sapiens (Human).